A 4599-amino-acid chain; its full sequence is Low-density lipoprotein receptor-related protein 1B (4599 aa).

The first 20 residues, 1–20 (MSEFLLALLTLSGLLPIARV), serve as a signal peptide directing secretion. At 25 to 4444 (ADRDQQLCDP…KSDHISTRSI (4420 aa)) the chain is on the extracellular side. LDL-receptor class A domains are found at residues 31 to 70 (LCDPGEFLCHDHVTCVSQSWLCDGDPDCPDDSDESLDTCP) and 76 to 114 (KCPLNHIACLGTNKCVHLSQLCNGVLDCPDGYDEGVHCQ). Cystine bridges form between Cys-32-Cys-45, Cys-39-Cys-58, Cys-52-Cys-69, Cys-77-Cys-90, Cys-84-Cys-103, Cys-97-Cys-113, Cys-120-Cys-129, Cys-125-Cys-138, Cys-140-Cys-153, Cys-159-Cys-169, Cys-165-Cys-178, and Cys-180-Cys-193. The region spanning 116 to 154 (LLSNCQQLNCQYKCTMVRNSTRCYCEDGFEITEDGRSCK) is the EGF-like 1 domain. An N-linked (GlcNAc...) asparagine glycan is attached at Asn-134. Residues 155 to 194 (DQDECAVYGTCSQTCRNTHGSYTCSCVEGYLMQPDNRSCK) enclose the EGF-like 2; calcium-binding domain. N-linked (GlcNAc...) asparagine glycans are attached at residues Asn-190, Asn-220, Asn-313, and Asn-360. LDL-receptor class B repeat units follow at residues 295 to 337 (RNLY…DPIA), 338 to 381 (GKLF…DLVN), and 382 to 425 (KLVY…FEDY). Asn-443 is a glycosylation site (N-linked (GlcNAc...) asparagine). Residues 471–517 (RSHACEVDPYGMPGGCSHICLLSSSYKTRTCRCRTGFNLGSDGRSCK) enclose the EGF-like 3 domain. LDL-receptor class B repeat units follow at residues 568 to 610 (NYIY…DWIG), 611 to 656 (NNLY…DPVN), 657 to 706 (GWMY…DFHT), and 707 to 750 (NTLY…HGNY). 2 N-linked (GlcNAc...) asparagine glycosylation sites follow: Asn-725 and Asn-758. The EGF-like 4 domain occupies 794 to 834 (GDNMCRVNNGGCSTLCLAIPGGRVCACADNQLLDENGTTCT). 6 disulfides stabilise this stretch: Cys-798–Cys-809, Cys-805–Cys-818, Cys-820–Cys-833, Cys-845–Cys-857, Cys-852–Cys-870, and Cys-864–Cys-881. Asn-829 is a glycosylation site (N-linked (GlcNAc...) asparagine). The 39-residue stretch at 844 to 882 (ICKAGEFRCKNRHCIQARWKCDGDDDCLDGSDEDSVNCF) folds into the LDL-receptor class A 3 domain. N-linked (GlcNAc...) asparagine glycosylation occurs at Asn-883. LDL-receptor class A domains are found at residues 885 to 923 (SCPDDQFKCQNNRCIPKRWLCDGANDCGSNEDESNQTCT), 926 to 963 (TCQVDQFSCGNGRCIPRAWLCDREDDCGDQTDEMASCE), 966 to 1003 (TCEPLTQFVCKSGRCISSKWHCDSDDDCGDGSDEVGCV), 1005 to 1043 (SCFDNQFRCSSGRCIPGHWACDGDNDCGDFSDEAQINCT), 1052 to 1089 (GCNGNEFQCHPDGNCVPDLWRCDGEKDCEDGSDEKGCN), 1094 to 1132 (LCDHKTKFSCWSTGRCINKAWVCDGDIDCEDQSDEDDCD), and 1135 to 1174 (LCGPPKHPCANDTSVCLQPEKLCNGKKDCPDGSDEGYLCD). Intrachain disulfides connect Cys-886–Cys-898, Cys-893–Cys-911, Cys-905–Cys-922, Cys-927–Cys-939, Cys-934–Cys-952, Cys-946–Cys-962, Cys-967–Cys-980, Cys-975–Cys-993, Cys-987–Cys-1002, Cys-1006–Cys-1018, Cys-1013–Cys-1031, Cys-1025–Cys-1042, Cys-1053–Cys-1066, Cys-1060–Cys-1079, and Cys-1073–Cys-1088. Asn-919 carries an N-linked (GlcNAc...) asparagine glycan. Asn-1041 is a glycosylation site (N-linked (GlcNAc...) asparagine). Asn-1089 is a glycosylation site (N-linked (GlcNAc...) asparagine). 6 cysteine pairs are disulfide-bonded: Cys-1095–Cys-1109, Cys-1103–Cys-1122, Cys-1116–Cys-1131, Cys-1136–Cys-1150, Cys-1143–Cys-1163, and Cys-1157–Cys-1173. The N-linked (GlcNAc...) asparagine glycan is linked to Asn-1145. EGF-like domains lie at 1174–1213 (DECSLNNGGCSNHCSVVPGRGIVCSCPEGLQLNKDNKTCE) and 1214–1253 (IVDYCSNHLKCSQVCEQHKHTVKCSCYEGWKLDVDGESCT). The N-linked (GlcNAc...) asparagine glycan is linked to Asn-1209. Asn-1298 carries an N-linked (GlcNAc...) asparagine glycan. LDL-receptor class B repeat units follow at residues 1300–1346 (SLLY…DWIA), 1347–1389 (GNIY…DPRY), 1390–1436 (GILF…DHFE), 1437–1480 (KRIV…LYGS), and 1481–1522 (EVYW…YHPS). Residues Asn-1502, Asn-1549, and Asn-1636 are each glycosylated (N-linked (GlcNAc...) asparagine). In terms of domain architecture, EGF-like 7 spans 1527 to 1570 (APNPCAANDGKGPCSHMCLINHNRSAACACPHLMKLSSDKKTCY). LDL-receptor class B repeat units follow at residues 1618-1660 (ERLY…DWVS), 1661-1704 (RNLY…HPVR), 1705-1744 (GKLYWTDGNTINMANMDGSNSKILFQNQKEPVGLSIDYVE), and 1745-1787 (NKLY…TIMD). Asn-1754 and Asn-1816 each carry an N-linked (GlcNAc...) asparagine glycan. The EGF-like 8 domain maps to 1834–1875 (GSNSCQLNNGGCSQLCLPTSETTRTCMCTVGYYLQKNRMSCQ). 3 disulfide bridges follow: Cys-1838-Cys-1849, Cys-1845-Cys-1859, and Cys-1861-Cys-1874. Residue Asn-1921 is glycosylated (N-linked (GlcNAc...) asparagine). LDL-receptor class B repeat units follow at residues 1922–1964 (DTIY…DWIA), 1965–2007 (GNIY…HPEK), 2008–2051 (GLLF…DYEE), and 2052–2095 (NKLY…FGAY). Residue Asn-1983 is glycosylated (N-linked (GlcNAc...) asparagine). N-linked (GlcNAc...) asparagine glycosylation is present at Asn-2105. One can recognise an EGF-like 9 domain in the interval 2143–2183 (GTNVCARDNGGCKQLCLYRGNSRRTCACAHGYLAEDGVTCL). 3 disulfide bridges follow: Cys-2147-Cys-2158, Cys-2154-Cys-2168, and Cys-2170-Cys-2182. 5 LDL-receptor class B repeats span residues 2239-2280 (NRIF…HRAW), 2281-2329 (DTLY…DECQ), 2330-2374 (NLMF…DYRA), 2375-2416 (EKLY…VYDN), and 2417-2459 (YIFW…VAND). Asn-2458, Asn-2488, and Asn-2507 each carry an N-linked (GlcNAc...) asparagine glycan. An EGF-like 10 domain is found at 2464-2504 (ELSPCALLNGGCHDLCLLTPNGRVNCSCRGDRILLEDNRCV). The region spanning 2509–2548 (SCNAYSEFECGNGECIDYQLTCDGIPHCKDKSDEKLLYCE) is the LDL-receptor class A 11 domain. 3 disulfides stabilise this stretch: Cys-2510/Cys-2523, Cys-2518/Cys-2536, and Cys-2530/Cys-2547. The N-linked (GlcNAc...) asparagine glycan is linked to Asn-2549. 6 consecutive LDL-receptor class A domains span residues 2551–2587 (SCRRGFKPCYNRRCIPHGKLCDGENDCGDNSDELDCK), 2590–2626 (TCATVEFRCADGTCIPRSARCNQNIDCADASDEKNCN), 2629–2675 (DCTH…LKCP), 2681–2717 (KCEENYFSCPSGRCILNTWICDGQKDCEDGRDEFHCD), 2719–2757 (SCSWNQFACSAQKCISKHWICDGEDDCGDGLDESDSICG), and 2760–2800 (TCAA…AGCA). 6 disulfide bridges follow: Cys-2552/Cys-2564, Cys-2559/Cys-2577, Cys-2571/Cys-2586, Cys-2591/Cys-2603, Cys-2598/Cys-2616, and Cys-2610/Cys-2625. 2 N-linked (GlcNAc...) asparagine glycosylation sites follow: Asn-2626 and Asn-2647. 12 disulfides stabilise this stretch: Cys-2630/Cys-2652, Cys-2646/Cys-2665, Cys-2659/Cys-2674, Cys-2682/Cys-2694, Cys-2689/Cys-2707, Cys-2701/Cys-2716, Cys-2720/Cys-2732, Cys-2727/Cys-2745, Cys-2739/Cys-2756, Cys-2761/Cys-2774, Cys-2768/Cys-2787, and Cys-2781/Cys-2799. N-linked (GlcNAc...) asparagine glycosylation is present at Asn-2802. 3 LDL-receptor class A domains span residues 2804–2841 (TCDENAFMCHNKVCIPKQFVCDHDDDCGDGSDESPQCG), 2844–2885 (QCGT…PKCK), and 2890–2926 (SCNSSFFMCKNGRCIPSGGLCDNKDDCGDGSDERNCH). Cystine bridges form between Cys-2805-Cys-2817, Cys-2812-Cys-2830, Cys-2824-Cys-2840, Cys-2845-Cys-2857, Cys-2852-Cys-2871, Cys-2865-Cys-2884, Cys-2891-Cys-2903, Cys-2898-Cys-2916, Cys-2910-Cys-2925, Cys-2930-Cys-2942, Cys-2938-Cys-2951, Cys-2953-Cys-2966, Cys-2972-Cys-2982, Cys-2978-Cys-2991, and Cys-2993-Cys-3007. Asn-2892 carries N-linked (GlcNAc...) asparagine glycosylation. The 41-residue stretch at 2927 to 2967 (INECLSKKVSGCSQDCQDLPVSYKCKCWPGFQLKDDGKTCV) folds into the EGF-like 11 domain. One can recognise an EGF-like 12; calcium-binding domain in the interval 2968–3008 (DIDECSSGFPCSQQCINTYGTYKCLCTDGYEIQPDNPNGCK). N-linked (GlcNAc...) asparagine glycosylation is found at Asn-3034, Asn-3066, and Asn-3076. 5 LDL-receptor class B repeats span residues 3055 to 3098 (EFIY…DWIG), 3099 to 3141 (KNLY…DPQA), 3142 to 3185 (GYLY…DYVN), 3186 to 3224 (RRLYWADENHIEFSNMDGSHRHKVPNQDIPGVIALTLFE), and 3225 to 3268 (DYIY…HSYR). A glycan (N-linked (GlcNAc...) asparagine) is linked at Asn-3164. Residues 3273–3314 (SKHLCMINNGGCSHLCLLAPGKTHTCACPTNFYLAADNRTCL) enclose the EGF-like 13 domain. N-linked (GlcNAc...) asparagine glycans are attached at residues Asn-3310 and Asn-3316. LDL-receptor class A domains lie at 3316-3353 (NCTASQFRCKTDKCIPFWWKCDTVDDCGDGSDEPDDCP), 3356-3392 (RCQPGRFQCGTGLCALPAFICDGENDCGDNSDELNCD), 3395-3432 (VCLSGQFKCTKNQKCIPVNLRCNGQDDCGDEEDERDCP), 3435-3472 (SCSPDYFQCKTTKHCISKLWVCDEDPDCADASDEANCD), 3475-3511 (TCGPHEFQCKNNNCIPDHWRCDSQNDCSDNSDEENCK), 3514-3550 (TCTLKDFLCANGDCVSSRFWCDGDFDCADGSDERNCE), 3552-3588 (SCSKDQFRCSNGQCIPAKWKCDGHEDCKYGEDEKSCE), 3593-3629 (TCSSREYICASDGCISASLKCNGEYDCADGSDEMDCV), 3631-3668 (ECKEDQFRCKNKAHCIPIRWLCDGIHDCVDGSDEENCE), 3673-3711 (ICRADEFLCNNSLCKLHFWVCDGEDDCGDNSDEAPDMCV), 3714-3752 (LCPSTRPHRCRNNRICLQSEQMCNGIDECGDNSDEDHCG), and 3761-3797 (PCKKDEFACSNKKCIPMDLQCDRLDDCGDGSDEQGCR). Intrachain disulfides connect Cys-3317–Cys-3329, Cys-3324–Cys-3342, Cys-3336–Cys-3352, Cys-3357–Cys-3369, Cys-3364–Cys-3382, Cys-3376–Cys-3391, Cys-3396–Cys-3409, Cys-3403–Cys-3422, Cys-3416–Cys-3431, Cys-3436–Cys-3449, Cys-3443–Cys-3462, Cys-3456–Cys-3471, Cys-3476–Cys-3488, Cys-3483–Cys-3501, Cys-3495–Cys-3510, Cys-3515–Cys-3527, Cys-3522–Cys-3540, Cys-3534–Cys-3549, Cys-3553–Cys-3565, Cys-3560–Cys-3578, Cys-3572–Cys-3587, Cys-3594–Cys-3606, Cys-3601–Cys-3619, Cys-3613–Cys-3628, Cys-3632–Cys-3645, Cys-3639–Cys-3658, Cys-3652–Cys-3667, Cys-3674–Cys-3686, Cys-3681–Cys-3699, Cys-3693–Cys-3710, Cys-3715–Cys-3729, Cys-3723–Cys-3742, Cys-3736–Cys-3751, Cys-3762–Cys-3774, Cys-3769–Cys-3787, Cys-3781–Cys-3796, Cys-3805–Cys-3818, Cys-3812–Cys-3827, Cys-3829–Cys-3842, Cys-3848–Cys-3858, Cys-3854–Cys-3867, and Cys-3869–Cys-3880. N-linked (GlcNAc...) asparagine glycosylation is present at Asn-3682. EGF-like domains follow at residues 3801–3843 (TEYT…RQCE) and 3844–3881 (DLNECLVFGTCSHQCINVEGSYKCVCDQNFQERNNTCI). N-linked (GlcNAc...) asparagine glycosylation is found at Asn-3877, Asn-3894, and Asn-3906. 4 LDL-receptor class B repeats span residues 3933-3980 (DMII…DWVA), 3981-4038 (GNIY…NPKR), 4039-4082 (GMMY…DYFS), and 4083-4127 (ERIY…FEDY). The N-linked (GlcNAc...) asparagine glycan is linked to Asn-4017. EGF-like domains are found at residues 4171-4208 (DLPNPCLDLACEFLCLLNPSGATCVCPEGKYLINGTCN), 4213-4249 (LDDSCKLTCENGGRCILNEKGDLRCHCWPSYSGERCE), 4249-4285 (EVNHCSNYCQNGGTCVPSVLGRPTCSCALGFTGPNCG), 4285-4321 (GKTVCEDFCQNGGTCIVTAGNQPYCHCQPEYTGDRCQ), 4321-4357 (QYYVCHHYCVNSESCTIGDDGSVECVCPTRYEGPKCE), 4357-4392 (EVDKCVRCHGGHCIINKDSEDIFCNCTNGKIASSCQ), and 4390-4427 (SCQLCDGYCYNGGTCQLDPETNVPVCLCSTNWSGTQCE). Asn-4204 carries N-linked (GlcNAc...) asparagine glycosylation. Cystine bridges form between Cys-4217–Cys-4227, Cys-4221–Cys-4237, Cys-4253–Cys-4263, Cys-4257–Cys-4273, Cys-4275–Cys-4284, Cys-4289–Cys-4299, Cys-4293–Cys-4309, Cys-4311–Cys-4320, Cys-4325–Cys-4335, Cys-4329–Cys-4345, and Cys-4347–Cys-4356. Asn-4381 is a glycosylation site (N-linked (GlcNAc...) asparagine). Intrachain disulfides connect Cys-4394–Cys-4404, Cys-4398–Cys-4415, and Cys-4417–Cys-4426. Asn-4420 carries N-linked (GlcNAc...) asparagine glycosylation. Residues 4445 to 4467 (AIIVPLVLLVTLITTLVIGLVLC) form a helical membrane-spanning segment. Residues 4468–4599 (KRKRRTKTIR…IEIGIRETVA (132 aa)) are Cytoplasmic-facing. 2 consecutive short sequence motifs (endocytosis signal) follow at residues 4492-4495 (NPSY) and 4559-4562 (NPVY).

This sequence belongs to the LDLR family. Binds LRPAP1, PLAU, PLAT and SERPINE1; binding is followed by internalization and degradation of the ligands. In terms of tissue distribution, expressed in thyroid gland and in salivary gland, as well as in adult and fetal brain.

Its subcellular location is the membrane. Functionally, potential cell surface proteins that bind and internalize ligands in the process of receptor-mediated endocytosis. In Homo sapiens (Human), this protein is Low-density lipoprotein receptor-related protein 1B (LRP1B).